Here is a 343-residue protein sequence, read N- to C-terminus: L-threonine 3-dehydrogenase (343 aa).

Cys40 lines the Zn(2+) pocket. Residues Thr42 and His45 each act as charge relay system in the active site. His65, Glu66, Cys95, Cys98, Cys101, and Cys109 together coordinate Zn(2+). NAD(+) contacts are provided by residues Ile177, Asp197, Arg202, 264 to 266, and 288 to 289; these read LGI and IY.

The protein belongs to the zinc-containing alcohol dehydrogenase family. In terms of assembly, homotetramer. Zn(2+) serves as cofactor.

The protein resides in the cytoplasm. The catalysed reaction is L-threonine + NAD(+) = (2S)-2-amino-3-oxobutanoate + NADH + H(+). The protein operates within amino-acid degradation; L-threonine degradation via oxydo-reductase pathway; glycine from L-threonine: step 1/2. Catalyzes the NAD(+)-dependent oxidation of L-threonine to 2-amino-3-ketobutyrate. This is L-threonine 3-dehydrogenase from Vibrio vulnificus (strain YJ016).